The sequence spans 146 residues: Aspartate carbamoyltransferase regulatory chain (146 aa).

Zn(2+) is bound by residues Cys-102, Cys-107, Cys-131, and Cys-134.

Belongs to the PyrI family. Contains catalytic and regulatory chains. Zn(2+) serves as cofactor.

In terms of biological role, involved in allosteric regulation of aspartate carbamoyltransferase. This is Aspartate carbamoyltransferase regulatory chain from Clostridium acetobutylicum (strain ATCC 824 / DSM 792 / JCM 1419 / IAM 19013 / LMG 5710 / NBRC 13948 / NRRL B-527 / VKM B-1787 / 2291 / W).